The primary structure comprises 252 residues: 14-3-3 protein 7 (252 aa).

The protein belongs to the 14-3-3 family. As to quaternary structure, homodimer.

This Solanum lycopersicum (Tomato) protein is 14-3-3 protein 7 (TFT7).